A 226-amino-acid polypeptide reads, in one-letter code: Lysoplasmalogenase TMEM86B (226 aa).

Over 1–23 the chain is Cytoplasmic; sequence MDPGKEGLPRKPRFSAQQLHVGK. A helical membrane pass occupies residues 24-40; sequence WLSPFFFTCAVYFLLWI. Over 41 to 46 the chain is Extracellular; it reads PDDQPS. A helical membrane pass occupies residues 47 to 64; the sequence is WVGALVKCLPVLSLVVFL. The Cytoplasmic portion of the chain corresponds to 65 to 76; that stretch reads RAVDAGGGYSAR. A helical transmembrane segment spans residues 77 to 93; it reads LQGALLCSAVGDACLVW. Topologically, residues 94–99 are extracellular; the sequence is PEAFLH. The helical transmembrane segment at 100-117 threads the bilayer; it reads GVAAFAAAHLLYLWAFGL. At 118-123 the chain is on the cytoplasmic side; sequence TPLQPG. A helical membrane pass occupies residues 124–140; the sequence is LLLLVILAALPYYGLLL. The Extracellular portion of the chain corresponds to 141 to 146; the sequence is WHLPPD. The chain crosses the membrane as a helical span at residues 147-163; sequence LVLALTAYSLALATMLW. Topologically, residues 164–171 are cytoplasmic; the sequence is RGLARGGS. The chain crosses the membrane as a helical span at residues 172 to 188; it reads TGWGALLFTLSDTTLAW. Residues 189-199 are Extracellular-facing; that stretch reads NAFAQPLPHAR. A helical membrane pass occupies residues 200–217; sequence LVVMTTYYSAQVLISLSV. The Cytoplasmic segment spans residues 218-226; sequence SQSPKLKPN.

This sequence belongs to the TMEM86 family. As to quaternary structure, homodimer.

The protein localises to the endoplasmic reticulum membrane. It is found in the cytoplasm. It carries out the reaction a 1-O-(1Z-alkenyl)-sn-glycero-3-phosphocholine + H2O = a 2,3-saturated aldehyde + sn-glycerol 3-phosphocholine. The catalysed reaction is a 1-O-(1Z-alkenyl)-sn-glycero-3-phosphoethanolamine + H2O = a 2,3-saturated aldehyde + sn-glycero-3-phosphoethanolamine. Its activity is regulated as follows. Competitively inhibited by lysophosphatidic acid. Functionally, catalyzes the hydrolysis of the vinyl ether bond of choline or ethanolamine lysoplasmalogens, forming fatty aldehyde and glycerophosphocholine or glycerophosphoethanolamine, respectively and is specific for the sn-2-deacylated (lyso) form of plasmalogen. The sequence is that of Lysoplasmalogenase TMEM86B (TMEM86B) from Sus scrofa (Pig).